Here is a 485-residue protein sequence, read N- to C-terminus: Probable serine/threonine-protein kinase nek1 (485 aa).

The 272-residue stretch at 12–283 (YLIKSQIGSG…TQQILEQVFI (272 aa)) folds into the Protein kinase domain. ATP-binding positions include 18–26 (IGSGSYGNT) and K41. The active-site Proton acceptor is the D136. Over residues 354 to 365 (KNQQQQSPQKLE) the composition is skewed to polar residues. The tract at residues 354–419 (KNQQQQSPQK…NNDKNNNINN (66 aa)) is disordered. The segment covering 366-419 (NNNNNNNDNNNNNNNNNNNNNNNNNNNNNNNNNNNNNNNNNNNNNNDKNNNINN) has biased composition (low complexity).

It belongs to the protein kinase superfamily. NEK Ser/Thr protein kinase family. NIMA subfamily.

The catalysed reaction is L-seryl-[protein] + ATP = O-phospho-L-seryl-[protein] + ADP + H(+). The enzyme catalyses L-threonyl-[protein] + ATP = O-phospho-L-threonyl-[protein] + ADP + H(+). This chain is Probable serine/threonine-protein kinase nek1 (nek1), found in Dictyostelium discoideum (Social amoeba).